Here is an 852-residue protein sequence, read N- to C-terminus: Ubiquitin carboxyl-terminal hydrolase 4 (852 aa).

One can recognise a Rhodanese domain in the interval 172 to 296 (ASGTVLLVDV…WSNAHPDFCV (125 aa)). The segment at 369 to 393 (RSSSSSSNINERPGSVPPQLSNGST) is disordered. One can recognise a USP domain in the interval 488 to 849 (VGLVNCGNSC…NAYVLFYHRI (362 aa)). The Nucleophile role is filled by Cys497. Catalysis depends on His806, which acts as the Proton acceptor.

It belongs to the peptidase C19 family.

The protein localises to the cytoplasm. It localises to the late endosome membrane. The enzyme catalyses Thiol-dependent hydrolysis of ester, thioester, amide, peptide and isopeptide bonds formed by the C-terminal Gly of ubiquitin (a 76-residue protein attached to proteins as an intracellular targeting signal).. RFU1 is an inhibitor of deubiquitination activity. Its function is as follows. Ubiquitin thioesterase that acts at the late endosome/prevacuolar compartment to recover ubiquitin from ubiquitinated membrane proteins en route to the vacuole. Also removes ubiquitin from soluble proteins targeted to proteasomes. Is essential to maintain a normal level of free ubiquitin. Required for promoting coordination of DNA replication and avoids DNA overreplication. The protein is Ubiquitin carboxyl-terminal hydrolase 4 (DOA4) of Eremothecium gossypii (strain ATCC 10895 / CBS 109.51 / FGSC 9923 / NRRL Y-1056) (Yeast).